The chain runs to 219 residues: 2-hydroxy-3-keto-5-methylthiopentenyl-1-phosphate phosphatase (219 aa).

The protein belongs to the HAD-like hydrolase superfamily. MtnX family.

The enzyme catalyses 2-hydroxy-5-methylsulfanyl-3-oxopent-1-enyl phosphate + H2O = 1,2-dihydroxy-5-(methylsulfanyl)pent-1-en-3-one + phosphate. The protein operates within amino-acid biosynthesis; L-methionine biosynthesis via salvage pathway; L-methionine from S-methyl-5-thio-alpha-D-ribose 1-phosphate: step 4/6. Functionally, dephosphorylates 2-hydroxy-3-keto-5-methylthiopentenyl-1-phosphate (HK-MTPenyl-1-P) yielding 1,2-dihydroxy-3-keto-5-methylthiopentene (DHK-MTPene). This Bacillus anthracis (strain A0248) protein is 2-hydroxy-3-keto-5-methylthiopentenyl-1-phosphate phosphatase.